Consider the following 1382-residue polypeptide: Hepatocyte growth factor receptor (1382 aa).

The signal sequence occupies residues 1 to 24; that stretch reads MKAPAVLAPGILVLLFTLVPRSHG. Residues 25–933 are Extracellular-facing; that stretch reads ECKEALVKSE…VIVQPDQNFM (909 aa). The 490-residue stretch at 27–516 folds into the Sema domain; that stretch reads KEALVKSEMN…TGNKITKIPL (490 aa). The N-linked (GlcNAc...) asparagine glycan is linked to Asn-45. Intrachain disulfides connect Cys-95–Cys-101, Cys-98–Cys-160, Cys-133–Cys-141, and Cys-173–Cys-176. An N-linked (GlcNAc...) asparagine glycan is attached at Asn-106. Asn-203 and Asn-359 each carry an N-linked (GlcNAc...) asparagine glycan. 2 cysteine pairs are disulfide-bonded: Cys-299/Cys-364 and Cys-386/Cys-398. Asn-400 and Asn-406 each carry an N-linked (GlcNAc...) asparagine glycan. Cystine bridges form between Cys-521–Cys-539, Cys-527–Cys-562, Cys-530–Cys-546, and Cys-542–Cys-552. IPT/TIG domains follow at residues 564–656, 658–740, and 743–837; these read PAIY…FSYV, PVIT…FSYR, and PIVD…LTYV. An O-linked (Man) threonine glycan is attached at Thr-583. Asn-608, Asn-614, and Asn-636 each carry an N-linked (GlcNAc...) asparagine glycan. O-linked (Man) threonine glycans are attached at residues Thr-677 and Thr-762. Residues Asn-786 and Asn-880 are each glycosylated (N-linked (GlcNAc...) asparagine). The helical transmembrane segment at 934–956 threads the bilayer; it reads GLIVGGVSISIILLLLLGLFLWL. Over 957-1382 the chain is Cytoplasmic; sequence KKKKRIKDLG…QDNVDGTVDT (426 aa). Ser-967 bears the Phosphoserine mark. At Thr-978 the chain carries Phosphothreonine. Ser-991, Ser-998, and Ser-1001 each carry phosphoserine. Tyr-1004 carries the post-translational modification Phosphotyrosine. A Protein kinase domain is found at 1079–1346; it reads VHFSEVIGRG…RISTIFSTFI (268 aa). ATP-binding positions include 1085–1093 and Lys-1111; that span reads IGRGHFGCV. Catalysis depends on Asp-1205, which acts as the Proton acceptor. The interval 1213–1382 is interaction with RANBP9; sequence LDEKFTVKVA…QDNVDGTVDT (170 aa). Residue Tyr-1231 is modified to Phosphotyrosine. A phosphotyrosine; by autocatalysis mark is found at Tyr-1235 and Tyr-1236. Thr-1290 is modified (phosphothreonine). The segment at 1321–1360 is interaction with MUC20; it reads WHPKAEMRPSFSELVSRISTIFSTFIGEHYVHVNATYVNV. Tyr-1350 and Tyr-1357 each carry phosphotyrosine; by autocatalysis. Tyr-1366 carries the phosphotyrosine modification.

Belongs to the protein kinase superfamily. Tyr protein kinase family. Heterodimer made of an alpha chain (50 kDa) and a beta chain (145 kDa) which are disulfide linked. Binds PLXNB1. Interacts when phosphorylated with downstream effectors including STAT3, PIK3R1, SRC, PCLG1, GRB2 and GAB1. Interacts with SPSB1, SPSB2 and SPSB4. Interacts with INPP5D/SHIP1. When phosphorylated at Tyr-1357, interacts with INPPL1/SHIP2. Interacts with RANBP9 and RANBP10, as well as SPSB1, SPSB2, SPSB3 and SPSB4. SPSB1 binding occurs in the presence and in the absence of HGF, however HGF treatment has a positive effect on this interaction. Interacts with MUC20; prevents interaction with GRB2 and suppresses hepatocyte growth factor-induced cell proliferation. Interacts with GRB10. Interacts with PTPN1 and PTPN2. Interacts with HSP90AA1 and HSP90AB1; the interaction suppresses MET kinase activity. Interacts with tensin TNS3. Interacts (when phosphorylated) with tensin TNS4 (via SH2 domain); the interaction increases MET protein stability by inhibiting MET endocytosis and subsequent lysosomal degradation. Autophosphorylated in response to ligand binding on Tyr-1235 and Tyr-1236 in the kinase domain leading to further phosphorylation of Tyr-1350 and Tyr-1357 in the C-terminal multifunctional docking site. Dephosphorylated by PTPRJ at Tyr-1350 and Tyr-1366. Dephosphorylated by PTPN1 and PTPN2. In terms of processing, ubiquitinated. Ubiquitination by CBL regulates the receptor stability and activity through proteasomal degradation. Post-translationally, O-mannosylation of IPT/TIG domains by TMEM260 is required for protein maturation. O-mannosylated residues are composed of single mannose glycans that are not elongated or modified.

Its subcellular location is the membrane. It catalyses the reaction L-tyrosyl-[protein] + ATP = O-phospho-L-tyrosyl-[protein] + ADP + H(+). With respect to regulation, in its inactive state, the C-terminal tail interacts with the catalytic domain and inhibits the kinase activity. Upon ligand binding, the C-terminal tail is displaced and becomes phosphorylated, thus increasing the kinase activity. Receptor tyrosine kinase that transduces signals from the extracellular matrix into the cytoplasm by binding to hepatocyte growth factor/HGF ligand. Regulates many physiological processes including proliferation, scattering, morphogenesis and survival. Ligand binding at the cell surface induces autophosphorylation of MET on its intracellular domain that provides docking sites for downstream signaling molecules. Following activation by ligand, interacts with the PI3-kinase subunit PIK3R1, PLCG1, SRC, GRB2, STAT3 or the adapter GAB1. Recruitment of these downstream effectors by MET leads to the activation of several signaling cascades including the RAS-ERK, PI3 kinase-AKT, or PLCgamma-PKC. The RAS-ERK activation is associated with the morphogenetic effects while PI3K/AKT coordinates prosurvival effects. During embryonic development, MET signaling plays a role in gastrulation, development and migration of muscles and neuronal precursors, angiogenesis and kidney formation. In adults, participates in wound healing as well as organ regeneration and tissue remodeling. Also promotes differentiation and proliferation of hematopoietic cells. In Oryctolagus cuniculus (Rabbit), this protein is Hepatocyte growth factor receptor (MET).